Reading from the N-terminus, the 149-residue chain is Large ribosomal subunit protein uL22c (149 aa).

Belongs to the universal ribosomal protein uL22 family. In terms of assembly, part of the 50S ribosomal subunit.

The protein localises to the plastid. Its subcellular location is the chloroplast. This protein binds specifically to 23S rRNA. Functionally, the globular domain of the protein is located near the polypeptide exit tunnel on the outside of the subunit, while an extended beta-hairpin is found that lines the wall of the exit tunnel in the center of the 70S ribosome. This chain is Large ribosomal subunit protein uL22c (rpl22-A), found in Pelargonium hortorum (Common geranium).